The sequence spans 124 residues: Small ribosomal subunit protein bS16 (124 aa).

Positions Glu-84–Arg-110 are enriched in basic and acidic residues. The tract at residues Glu-84–Glu-124 is disordered. Low complexity predominate over residues Glu-111–Glu-124.

The protein belongs to the bacterial ribosomal protein bS16 family.

This Paracoccus denitrificans (strain Pd 1222) protein is Small ribosomal subunit protein bS16.